Consider the following 291-residue polypeptide: N-acetylmannosamine kinase (291 aa).

ATP contacts are provided by residues 5–12 (AIDIGGTK) and 132–139 (GVGGGVVS). Residues His-156, Cys-166, Cys-168, and Cys-173 each contribute to the Zn(2+) site.

This sequence belongs to the ROK (NagC/XylR) family. NanK subfamily. In terms of assembly, homodimer.

It carries out the reaction an N-acyl-D-mannosamine + ATP = an N-acyl-D-mannosamine 6-phosphate + ADP + H(+). It functions in the pathway amino-sugar metabolism; N-acetylneuraminate degradation; D-fructose 6-phosphate from N-acetylneuraminate: step 2/5. Catalyzes the phosphorylation of N-acetylmannosamine (ManNAc) to ManNAc-6-P. In Escherichia fergusonii (strain ATCC 35469 / DSM 13698 / CCUG 18766 / IAM 14443 / JCM 21226 / LMG 7866 / NBRC 102419 / NCTC 12128 / CDC 0568-73), this protein is N-acetylmannosamine kinase.